Consider the following 173-residue polypeptide: Co-chaperone protein HscB homolog (173 aa).

The J domain maps to 5-77 (CHFAQFDLQP…PRRALYLLTL (73 aa)).

The protein belongs to the HscB family. As to quaternary structure, interacts with HscA and stimulates its ATPase activity.

Functionally, co-chaperone involved in the maturation of iron-sulfur cluster-containing proteins. Seems to help targeting proteins to be folded toward HscA. The chain is Co-chaperone protein HscB homolog from Pseudomonas aeruginosa (strain UCBPP-PA14).